The following is a 470-amino-acid chain: Cysteine--tRNA ligase (470 aa).

Zn(2+) is bound at residue Cys-30. Residues 32 to 42 carry the 'HIGH' region motif; it reads PTVYNYIHIGN. Residues Cys-211, His-236, and Glu-240 each contribute to the Zn(2+) site. The 'KMSKS' region signature appears at 268–272; it reads KMSKS. Lys-271 serves as a coordination point for ATP.

It belongs to the class-I aminoacyl-tRNA synthetase family. As to quaternary structure, monomer. Requires Zn(2+) as cofactor.

It localises to the cytoplasm. The catalysed reaction is tRNA(Cys) + L-cysteine + ATP = L-cysteinyl-tRNA(Cys) + AMP + diphosphate. The polypeptide is Cysteine--tRNA ligase (Fervidobacterium nodosum (strain ATCC 35602 / DSM 5306 / Rt17-B1)).